Consider the following 728-residue polypeptide: Golgin subfamily A member 5 (728 aa).

An N-acetylserine modification is found at serine 2. Over 2–695 (SWFADLAGRA…IFLRRYPIAR (694 aa)) the chain is Cytoplasmic. Residues arginine 27 and arginine 89 each carry the dimethylated arginine modification. A disordered region spans residues 88 to 202 (SRTGGDASHP…KKSTEESTVS (115 aa)). At serine 116 the chain carries Phosphoserine. Residues 134 to 146 (PTGRVEIKKEKGK) are compositionally biased toward basic and acidic residues. Positions 152–167 (SSQSSAVSSVTTSVTT) are enriched in low complexity. Residues 173 to 187 (ENSGSQSPEVSSSDS) are compositionally biased toward polar residues. Residues 216-628 (GSMSHELSNL…LEQQLHSAAT (413 aa)) adopt a coiled-coil conformation. The chain crosses the membrane as a helical; Anchor for type IV membrane protein span at residues 696–716 (VFVIIYMALLHLWVMIVLLTY). Residues 717-728 (SPEMHHDQPYGK) lie on the Lumenal side of the membrane.

As to quaternary structure, homodimer. Interacts with RAB1A that has been activated by GTP-binding. Interacts with isoform CASP of CUX1. Post-translationally, highly phosphorylated during mitosis. Phosphorylation is barely detectable during interphase.

The protein localises to the golgi apparatus membrane. In terms of biological role, involved in maintaining Golgi structure. Stimulates the formation of Golgi stacks and ribbons. Involved in intra-Golgi retrograde transport. This Rattus norvegicus (Rat) protein is Golgin subfamily A member 5 (Golga5).